The sequence spans 205 residues: Methylthioribulose-1-phosphate dehydratase (205 aa).

Zn(2+) contacts are provided by histidine 94 and histidine 96.

It belongs to the aldolase class II family. MtnB subfamily. Zn(2+) is required as a cofactor.

It catalyses the reaction 5-(methylsulfanyl)-D-ribulose 1-phosphate = 5-methylsulfanyl-2,3-dioxopentyl phosphate + H2O. The protein operates within amino-acid biosynthesis; L-methionine biosynthesis via salvage pathway; L-methionine from S-methyl-5-thio-alpha-D-ribose 1-phosphate: step 2/6. Its function is as follows. Catalyzes the dehydration of methylthioribulose-1-phosphate (MTRu-1-P) into 2,3-diketo-5-methylthiopentyl-1-phosphate (DK-MTP-1-P). This is Methylthioribulose-1-phosphate dehydratase from Pectobacterium atrosepticum (strain SCRI 1043 / ATCC BAA-672) (Erwinia carotovora subsp. atroseptica).